The chain runs to 603 residues: DNA-directed RNA polymerase subunit beta' N-terminal section (603 aa).

Zn(2+) is bound by residues cysteine 283, cysteine 285, cysteine 329, and cysteine 332.

Belongs to the RNA polymerase beta' chain family. RpoC1 subfamily. In plastids the minimal PEP RNA polymerase catalytic core is composed of four subunits: alpha, beta, beta', and beta''. When a (nuclear-encoded) sigma factor is associated with the core the holoenzyme is formed, which can initiate transcription. Zn(2+) is required as a cofactor.

It is found in the plastid. It localises to the chloroplast. It carries out the reaction RNA(n) + a ribonucleoside 5'-triphosphate = RNA(n+1) + diphosphate. DNA-dependent RNA polymerase catalyzes the transcription of DNA into RNA using the four ribonucleoside triphosphates as substrates. The chain is DNA-directed RNA polymerase subunit beta' N-terminal section (rpoC1A) from Chlamydomonas reinhardtii (Chlamydomonas smithii).